A 324-amino-acid polypeptide reads, in one-letter code: Probable carboxylesterase 9 (324 aa).

An Involved in the stabilization of the negatively charged intermediate by the formation of the oxyanion hole motif is present at residues 86 to 88; the sequence is HGS. Active-site residues include Ser171, Asp272, and His302.

The protein belongs to the 'GDXG' lipolytic enzyme family. In terms of tissue distribution, expressed in flowers.

The catalysed reaction is a carboxylic ester + H2O = an alcohol + a carboxylate + H(+). Its function is as follows. Carboxylesterase acting on esters with varying acyl chain length. The chain is Probable carboxylesterase 9 (CXE9) from Arabidopsis thaliana (Mouse-ear cress).